The chain runs to 338 residues: MQVYYDKDCDLSIIQGMKVAIIGFGSQGHAHAANLQDSGVDVTVGLRPGSSSIKKAEGYGLKTADVATAVAGADVVMILTPDEFQSVLYKEEIEPNIKQGAVLAFAHGFAIIYNQIEPRKDLDVIMIAPKAPGHTVRSEFVRGGGIPDLIAIQQDASGKAKEIALSYASGVGGGRTGIIETTFRDECETDLFGEQAVLCGGAVELVKAGFDTLVEAGYEPEMAYFECLHELKLIVDLMFEGGIADMNYSISNNAEYGEYVTGPRVINDESRAAMREALKNIQTGEYAKQFILEGQSNYPSMTAARRLNEEHGIEVVGRKLRAMMPWIASNKIVDQEKN.

The 181-residue stretch at 1–181 (MQVYYDKDCD…GGGRTGIIET (181 aa)) folds into the KARI N-terminal Rossmann domain. NADP(+) is bound by residues 24–27 (FGSQ), Arg47, Ser50, Ser52, and 82–85 (DEFQ). Residue His107 is part of the active site. NADP(+) is bound at residue Gly133. Residues 182–327 (TFRDECETDL…RKLRAMMPWI (146 aa)) form the KARI C-terminal knotted domain. 4 residues coordinate Mg(2+): Asp190, Glu194, Glu226, and Glu230. Ser251 serves as a coordination point for substrate.

The protein belongs to the ketol-acid reductoisomerase family. Mg(2+) serves as cofactor.

It catalyses the reaction (2R)-2,3-dihydroxy-3-methylbutanoate + NADP(+) = (2S)-2-acetolactate + NADPH + H(+). It carries out the reaction (2R,3R)-2,3-dihydroxy-3-methylpentanoate + NADP(+) = (S)-2-ethyl-2-hydroxy-3-oxobutanoate + NADPH + H(+). Its pathway is amino-acid biosynthesis; L-isoleucine biosynthesis; L-isoleucine from 2-oxobutanoate: step 2/4. The protein operates within amino-acid biosynthesis; L-valine biosynthesis; L-valine from pyruvate: step 2/4. Functionally, involved in the biosynthesis of branched-chain amino acids (BCAA). Catalyzes an alkyl-migration followed by a ketol-acid reduction of (S)-2-acetolactate (S2AL) to yield (R)-2,3-dihydroxy-isovalerate. In the isomerase reaction, S2AL is rearranged via a Mg-dependent methyl migration to produce 3-hydroxy-3-methyl-2-ketobutyrate (HMKB). In the reductase reaction, this 2-ketoacid undergoes a metal-dependent reduction by NADPH to yield (R)-2,3-dihydroxy-isovalerate. This is Ketol-acid reductoisomerase (NADP(+)) from Hydrogenovibrio crunogenus (strain DSM 25203 / XCL-2) (Thiomicrospira crunogena).